The sequence spans 235 residues: MKIGIIGAIEQEIRKIKEIINNLKIKKIGNIKIYTGTFKKIEIFLILSGIGKVSASMSTTISINLFQPDFIINSGSAGSLNACLKIGDIIIPKKTCYYDVDLTNFGYSKGQIPEYPQTFKTNKNLREILKEIAVEFKFKFLTGLLVTGDSFIRKSNCIKKIKNQFSSAIGVDMESTAIGQVCHNFKIPFIIIKSISDLSDNNATSHFEKNIPIASLKSSKLVKLLLKKISSQNSI.

Glu-12 (proton acceptor) is an active-site residue. Substrate contacts are provided by residues Gly-78, Ile-152, and 173–174; that span reads ME. Residue Asp-197 is the Proton donor of the active site.

The protein belongs to the PNP/UDP phosphorylase family. MtnN subfamily. In terms of assembly, homodimer.

It carries out the reaction S-adenosyl-L-homocysteine + H2O = S-(5-deoxy-D-ribos-5-yl)-L-homocysteine + adenine. The catalysed reaction is S-methyl-5'-thioadenosine + H2O = 5-(methylsulfanyl)-D-ribose + adenine. The enzyme catalyses 5'-deoxyadenosine + H2O = 5-deoxy-D-ribose + adenine. Its pathway is amino-acid biosynthesis; L-methionine biosynthesis via salvage pathway; S-methyl-5-thio-alpha-D-ribose 1-phosphate from S-methyl-5'-thioadenosine (hydrolase route): step 1/2. In terms of biological role, catalyzes the irreversible cleavage of the glycosidic bond in both 5'-methylthioadenosine (MTA) and S-adenosylhomocysteine (SAH/AdoHcy) to adenine and the corresponding thioribose, 5'-methylthioribose and S-ribosylhomocysteine, respectively. Also cleaves 5'-deoxyadenosine, a toxic by-product of radical S-adenosylmethionine (SAM) enzymes, into 5-deoxyribose and adenine. Thus, is required for in vivo function of the radical SAM enzymes biotin synthase and lipoic acid synthase, that are inhibited by 5'-deoxyadenosine accumulation. The polypeptide is 5'-methylthioadenosine/S-adenosylhomocysteine nucleosidase (Buchnera aphidicola subsp. Schizaphis graminum (strain Sg)).